The following is a 202-amino-acid chain: Solute carrier family 66 member 3 (202 aa).

The N-terminal stretch at 1-19 (MEAGLLWFCNWSTLGVCAA) is a signal peptide. The next 4 helical transmembrane spans lie at 33 to 53 (SARG…LVFL), 64 to 84 (LTYL…LFVF), 94 to 114 (LPYM…KWII), and 171 to 191 (LTIL…TATV).

It localises to the membrane. The polypeptide is Solute carrier family 66 member 3 (Slc66a3) (Mus musculus (Mouse)).